Consider the following 230-residue polypeptide: Thymidylate kinase (230 aa).

Position 20 to 27 (20 to 27) interacts with ATP; sequence GGEGSGKS.

The protein belongs to the thymidylate kinase family.

It carries out the reaction dTMP + ATP = dTDP + ADP. Phosphorylation of dTMP to form dTDP in both de novo and salvage pathways of dTTP synthesis. The chain is Thymidylate kinase from Nitrobacter hamburgensis (strain DSM 10229 / NCIMB 13809 / X14).